Here is a 256-residue protein sequence, read N- to C-terminus: Triosephosphate isomerase (256 aa).

9 to 11 serves as a coordination point for substrate; the sequence is NWK. Residue His94 is the Electrophile of the active site. The active-site Proton acceptor is Glu166. Substrate is bound by residues Gly172, Ser211, and 232–233; that span reads GG.

It belongs to the triosephosphate isomerase family. Homodimer.

Its subcellular location is the cytoplasm. It catalyses the reaction D-glyceraldehyde 3-phosphate = dihydroxyacetone phosphate. It functions in the pathway carbohydrate biosynthesis; gluconeogenesis. The protein operates within carbohydrate degradation; glycolysis; D-glyceraldehyde 3-phosphate from glycerone phosphate: step 1/1. In terms of biological role, involved in the gluconeogenesis. Catalyzes stereospecifically the conversion of dihydroxyacetone phosphate (DHAP) to D-glyceraldehyde-3-phosphate (G3P). The chain is Triosephosphate isomerase from Natranaerobius thermophilus (strain ATCC BAA-1301 / DSM 18059 / JW/NM-WN-LF).